Consider the following 678-residue polypeptide: MSSDSLKKRKPKVNRSEDGKRGRHDEQEGRYYSEEAEVDVRDSREDYQLYKDTCVALQRLMSEIQDLKSKGSKDSAMEIEEKKIQSCVHFMTLKKLNRLANIRLKKARDQTHEAKQKVDAYNLQLQNLLYEVMHLQKEITKCLEFKSKHEEIELVSVEEFYSDAPAAISKPEITSTDPHQQTLSRLDWELEQRKRLAEKYKECLASKEKILKEIEIKKEYLNTLQPQLNSIMQASLPVQEYLSMPFDCMHKQYETARHLPAPLYVLFVQASAYSQACDQKLVVAIEGNVEEARALFKPPEDSQDDESDSDAEEEQTTKRRRPTLGVQLDDKRKEMLKRHPLCVTLTLMCKEGSTLTLTFYFLMNLNILTVKVKIQPAFELSTAISAGDLLNPDLILGCLYQGDDGKTTPNPANKYQFDKIGILSLSDYISELGHPYVWAQTMGGLHFPTDQPQPEFVADNALSASHMEKTIKLLKTRLLSRLSLHRQFASLEHGSIPVSLECQSLFPAKVISRLTKWNVIAYEDYLALPYTKDVVECGLAKETDQYFCLLIERGTAKLNGVVVLNPDYSSVPPVFSLCLNWKGERSSSNDDNIGVMESEVNVYYKELCGPPPGFQLLTNQIQRLCMLLDVYLETERHDNSVEGPHEFPPEKICLRLLRGPSRTKPFKYNYPQGFFSHR.

2 disordered regions span residues 1–37 and 294–329; these read MSSD…EEAE and ALFK…VQLD. Residues 7-10 carry the Nuclear localization signal motif; the sequence is KKRK. A compositionally biased stretch (basic and acidic residues) spans 14–37; sequence NRSEDGKRGRHDEQEGRYYSEEAE. Acidic residues predominate over residues 301 to 314; that stretch reads DSQDDESDSDAEEE.

Belongs to the THOC5 family. As to quaternary structure, component of the THO subcomplex, which is composed of thoc1, thoc2, thoc3, thoc5, thoc6 and thoc7. Component of the transcription/export (TREX) complex at least composed of alyref/thoc4, ddx39b, sarnp/cip29, chtop and the THO subcomplex. Interacts with thoc7.

Its subcellular location is the nucleus. The protein localises to the nucleus speckle. The protein resides in the cytoplasm. Component of the THO subcomplex of the TREX complex which is thought to couple mRNA transcription, processing and nuclear export, and which specifically associates with spliced mRNA and not with unspliced pre-mRNA. Plays a key structural role in the oligomerization of the THO-ddx39b complex. TREX is recruited to spliced mRNAs by a transcription-independent mechanism, binds to mRNA upstream of the exon-junction complex (EJC) and is recruited in a splicing- and cap-dependent manner to a region near the 5' end of the mRNA where it functions in mRNA export to the cytoplasm via the TAP/NXF1 pathway. May be involved in cell differentiation. This is THO complex subunit 5 homolog B (thoc5-b) from Xenopus laevis (African clawed frog).